The primary structure comprises 443 residues: MDEEDQLIQPQDQSCWATLPDVCLRRVFWWLGDRDRSRAALVCRKWNQMMYSADLWRYRTITFSGRPSRVHASEFESALWYVKKFGRYLEHLEIKFLNPYNAVLTKKFQVTMRGLLSCLGKSNNRLKSLSIQHLELDRLVWRNSIRSSFMKSLSFFLKKMGKHLNYLSLKGARLTTEQGCHILNALSYLRNESTVTELNIEDCFSHHLAVYSSPQFNKTMATFRNLVSLTLNYNCISDELLENLCDNNTGTLRTMNIKCHIHDPHGQVIWGMSWAKLARHATSLKVNFFFERVMKYERLARILLQEIPIRSISLRSCYFSDPDWSMRPTLTDLLPTFRHTLQKLTFEFNNNHESLDEELHLLILSCRKLFYFKIWAFLDVKFVERILKSREEGQCALRTLKVRIYTNRYETNEEDRTLREIYRKYRKLIDSELNYFVIAYPMM.

The F-box domain occupies 16 to 61; it reads WATLPDVCLRRVFWWLGDRDRSRAALVCRKWNQMMYSADLWRYRTI.

Directly interacts with SKP1 and CUL1.

In terms of biological role, substrate-recognition component of the SCF (SKP1-CUL1-F-box protein)-type E3 ubiquitin ligase complex. The polypeptide is F-box only protein 39 (FBXO39) (Bos taurus (Bovine)).